The sequence spans 60 residues: UPF0434 protein Mfla_2088 (60 aa).

The protein belongs to the UPF0434 family.

In Methylobacillus flagellatus (strain ATCC 51484 / DSM 6875 / VKM B-1610 / KT), this protein is UPF0434 protein Mfla_2088.